Reading from the N-terminus, the 455-residue chain is Bifunctional protein GlmU (455 aa).

The interval 1-225 (MNIVILAAGL…EWETLGVNSK (225 aa)) is pyrophosphorylase. UDP-N-acetyl-alpha-D-glucosamine is bound by residues 6–9 (LAAG), lysine 20, glutamine 71, 76–77 (GT), 98–100 (YGD), glycine 135, glutamate 150, asparagine 165, and asparagine 223. A Mg(2+)-binding site is contributed by aspartate 100. A Mg(2+)-binding site is contributed by asparagine 223. A linker region spans residues 226–246 (VQLAELERIHQRNLAQQLLED). Positions 247 to 455 (GVTLIDPARI…QRPVKQKKDA (209 aa)) are N-acetyltransferase. Arginine 329 and lysine 347 together coordinate UDP-N-acetyl-alpha-D-glucosamine. Histidine 359 (proton acceptor) is an active-site residue. Tyrosine 362 and asparagine 373 together coordinate UDP-N-acetyl-alpha-D-glucosamine. Residues alanine 376, 382–383 (NY), serine 401, alanine 419, and arginine 436 each bind acetyl-CoA.

The protein in the N-terminal section; belongs to the N-acetylglucosamine-1-phosphate uridyltransferase family. This sequence in the C-terminal section; belongs to the transferase hexapeptide repeat family. As to quaternary structure, homotrimer. It depends on Mg(2+) as a cofactor.

The protein resides in the cytoplasm. It catalyses the reaction alpha-D-glucosamine 1-phosphate + acetyl-CoA = N-acetyl-alpha-D-glucosamine 1-phosphate + CoA + H(+). It carries out the reaction N-acetyl-alpha-D-glucosamine 1-phosphate + UTP + H(+) = UDP-N-acetyl-alpha-D-glucosamine + diphosphate. Its pathway is nucleotide-sugar biosynthesis; UDP-N-acetyl-alpha-D-glucosamine biosynthesis; N-acetyl-alpha-D-glucosamine 1-phosphate from alpha-D-glucosamine 6-phosphate (route II): step 2/2. It participates in nucleotide-sugar biosynthesis; UDP-N-acetyl-alpha-D-glucosamine biosynthesis; UDP-N-acetyl-alpha-D-glucosamine from N-acetyl-alpha-D-glucosamine 1-phosphate: step 1/1. The protein operates within bacterial outer membrane biogenesis; LPS lipid A biosynthesis. Its function is as follows. Catalyzes the last two sequential reactions in the de novo biosynthetic pathway for UDP-N-acetylglucosamine (UDP-GlcNAc). The C-terminal domain catalyzes the transfer of acetyl group from acetyl coenzyme A to glucosamine-1-phosphate (GlcN-1-P) to produce N-acetylglucosamine-1-phosphate (GlcNAc-1-P), which is converted into UDP-GlcNAc by the transfer of uridine 5-monophosphate (from uridine 5-triphosphate), a reaction catalyzed by the N-terminal domain. The protein is Bifunctional protein GlmU of Ralstonia nicotianae (strain ATCC BAA-1114 / GMI1000) (Ralstonia solanacearum).